The primary structure comprises 1215 residues: Protein benign gonial cell neoplasm (1215 aa).

The stretch at 407-439 (TGKTAVHFASELNKANHLRLLLFMGADPYIVDL) is one ANK repeat. At threonine 898 the chain carries Phosphothreonine.

As to quaternary structure, part of a complex composed of at least mei-P26, bam, bgcn and Sxl; this complex is involved in translational repression of nanos mRNA. Interacts with bam (via C-terminus); the interaction is direct. Interacts with mei-P26; the interaction is direct and does not require bam. Weakly interacts with wh/wuho; this interaction may be required for the function or formation of the mei-P26-bgcn-bam-Sxl complex. Part of a complex composed of at least tut, bam and bgcn; complex formation does not require RNA. Interacts with tut; the interaction is indirect and is mediated by bam. As part of the bam-bgcn-tut complex associates with twin; may recruit the CCR4-NOT1 deadenylation complex to mRNA 3'UTRs to mediate post-transcriptional regulation of expression. In terms of tissue distribution, expressed in testis and in 5-8 germline stem cells of ovaries, immediately adjacent to terminal filament. Expressed in ovarian germline cells throughout the germarium (at protein level).

Functionally, forms a complex with tut and bam involved in 3'UTR-dependent post-transcriptional repression of several 3'-RNA processing factors, which promotes germline stem cell lineage differentiation and mitosis-to-meiosis transition. Part of a complex with bam involved in 3'-UTR-dependent translational repression of a subset of mRNAs, including those for mei-P26, nanos and shg/E-cadherin; may act as a promiscuous RNA-binding protein tethering bam to its target mRNAs. Required for regulating the progression of gonialblast cells through transit amplification and differentiation into gametes. The sequence is that of Protein benign gonial cell neoplasm from Drosophila melanogaster (Fruit fly).